A 365-amino-acid chain; its full sequence is Aminomethyltransferase (365 aa).

It belongs to the GcvT family. As to quaternary structure, the glycine cleavage system is composed of four proteins: P, T, L and H.

The enzyme catalyses N(6)-[(R)-S(8)-aminomethyldihydrolipoyl]-L-lysyl-[protein] + (6S)-5,6,7,8-tetrahydrofolate = N(6)-[(R)-dihydrolipoyl]-L-lysyl-[protein] + (6R)-5,10-methylene-5,6,7,8-tetrahydrofolate + NH4(+). In terms of biological role, the glycine cleavage system catalyzes the degradation of glycine. This is Aminomethyltransferase from Chlorobium luteolum (strain DSM 273 / BCRC 81028 / 2530) (Pelodictyon luteolum).